The sequence spans 231 residues: PIAGSMVLAAILLKLGGYGIIRMMQILPTTKTDMFLPFVVLALWGAILANLTCLQQTDLKSLIAYSSVSHMGLVVAAIIIQTPWGLAGAMTLMIAHGFTSSALFCLANTTYERTHTRILILTRGFHNILPMATTWWLLTNLMNIAIPPSMNFTSELLITSALFNWCPTTIILLGLSMLITASYSLHMFLSTQMGPTLLNNQTEPTHSREHLLMTLHITPLMMISMKPELIM.

The next 6 helical transmembrane spans lie at P1–I21, M34–L54, S61–I80, G85–A107, I128–P148, and T169–L189.

This sequence belongs to the complex I subunit 4 family.

The protein resides in the mitochondrion membrane. The catalysed reaction is a ubiquinone + NADH + 5 H(+)(in) = a ubiquinol + NAD(+) + 4 H(+)(out). Core subunit of the mitochondrial membrane respiratory chain NADH dehydrogenase (Complex I) that is believed to belong to the minimal assembly required for catalysis. Complex I functions in the transfer of electrons from NADH to the respiratory chain. The immediate electron acceptor for the enzyme is believed to be ubiquinone. This Gloydius blomhoffii (Mamushi) protein is NADH-ubiquinone oxidoreductase chain 4 (MT-ND4).